Consider the following 260-residue polypeptide: Glutathione S-transferase domain-containing protein DDB_G0274223 (260 aa).

The GST N-terminal domain occupies 7–96; the sequence is KVDYIFYTNN…YLAQKYNTFL (90 aa). Positions 102-233 constitute a GST C-terminal domain; that stretch reads NPHENSDVIT…GFKTFNPSAL (132 aa).

It belongs to the GST superfamily.

In Dictyostelium discoideum (Social amoeba), this protein is Glutathione S-transferase domain-containing protein DDB_G0274223.